We begin with the raw amino-acid sequence, 47 residues long: MTKGKRTFQPNNRRRARVHGFRLRMRTRAGRSIVSSRRRKGRRTLSA.

Belongs to the bacterial ribosomal protein bL34 family.

This chain is Large ribosomal subunit protein bL34, found in Mycobacterium tuberculosis (strain ATCC 25177 / H37Ra).